Reading from the N-terminus, the 423-residue chain is Serine--tRNA ligase (423 aa).

230-232 (TSE) contacts L-serine. 261-263 (RSE) provides a ligand contact to ATP. An L-serine-binding site is contributed by Glu-284. An ATP-binding site is contributed by 348 to 351 (EISS). Position 384 (Ser-384) interacts with L-serine.

It belongs to the class-II aminoacyl-tRNA synthetase family. Type-1 seryl-tRNA synthetase subfamily. In terms of assembly, homodimer. The tRNA molecule binds across the dimer.

The protein localises to the cytoplasm. The catalysed reaction is tRNA(Ser) + L-serine + ATP = L-seryl-tRNA(Ser) + AMP + diphosphate + H(+). The enzyme catalyses tRNA(Sec) + L-serine + ATP = L-seryl-tRNA(Sec) + AMP + diphosphate + H(+). The protein operates within aminoacyl-tRNA biosynthesis; selenocysteinyl-tRNA(Sec) biosynthesis; L-seryl-tRNA(Sec) from L-serine and tRNA(Sec): step 1/1. Functionally, catalyzes the attachment of serine to tRNA(Ser). Is also able to aminoacylate tRNA(Sec) with serine, to form the misacylated tRNA L-seryl-tRNA(Sec), which will be further converted into selenocysteinyl-tRNA(Sec). This Macrococcus caseolyticus (strain JCSC5402) (Macrococcoides caseolyticum) protein is Serine--tRNA ligase.